The following is a 72-amino-acid chain: NAD(P)H-quinone oxidoreductase subunit O (72 aa).

Belongs to the complex I NdhO subunit family. In terms of assembly, NDH-1 can be composed of about 15 different subunits; different subcomplexes with different compositions have been identified which probably have different functions.

It localises to the cellular thylakoid membrane. The catalysed reaction is a plastoquinone + NADH + (n+1) H(+)(in) = a plastoquinol + NAD(+) + n H(+)(out). The enzyme catalyses a plastoquinone + NADPH + (n+1) H(+)(in) = a plastoquinol + NADP(+) + n H(+)(out). Functionally, NDH-1 shuttles electrons from an unknown electron donor, via FMN and iron-sulfur (Fe-S) centers, to quinones in the respiratory and/or the photosynthetic chain. The immediate electron acceptor for the enzyme in this species is believed to be plastoquinone. Couples the redox reaction to proton translocation, and thus conserves the redox energy in a proton gradient. Cyanobacterial NDH-1 also plays a role in inorganic carbon-concentration. The chain is NAD(P)H-quinone oxidoreductase subunit O from Synechococcus sp. (strain JA-3-3Ab) (Cyanobacteria bacterium Yellowstone A-Prime).